The sequence spans 334 residues: Ornithine carbamoyltransferase (334 aa).

Residues 57–60, glutamine 84, arginine 108, and 135–138 each bind carbamoyl phosphate; these read STRT and HPTQ. L-ornithine is bound by residues asparagine 169, aspartate 233, and 237 to 238; that span reads SM. Carbamoyl phosphate contacts are provided by residues 275–276 and arginine 320; that span reads CL.

It belongs to the aspartate/ornithine carbamoyltransferase superfamily. OTCase family.

The protein resides in the cytoplasm. It carries out the reaction carbamoyl phosphate + L-ornithine = L-citrulline + phosphate + H(+). It participates in amino-acid biosynthesis; L-arginine biosynthesis; L-arginine from L-ornithine and carbamoyl phosphate: step 1/3. Reversibly catalyzes the transfer of the carbamoyl group from carbamoyl phosphate (CP) to the N(epsilon) atom of ornithine (ORN) to produce L-citrulline. The polypeptide is Ornithine carbamoyltransferase (Aeromonas salmonicida (strain A449)).